The sequence spans 416 residues: Gamma-glutamyl phosphate reductase (416 aa).

Belongs to the gamma-glutamyl phosphate reductase family.

The protein localises to the cytoplasm. It catalyses the reaction L-glutamate 5-semialdehyde + phosphate + NADP(+) = L-glutamyl 5-phosphate + NADPH + H(+). It functions in the pathway amino-acid biosynthesis; L-proline biosynthesis; L-glutamate 5-semialdehyde from L-glutamate: step 2/2. Its function is as follows. Catalyzes the NADPH-dependent reduction of L-glutamate 5-phosphate into L-glutamate 5-semialdehyde and phosphate. The product spontaneously undergoes cyclization to form 1-pyrroline-5-carboxylate. The protein is Gamma-glutamyl phosphate reductase of Salmonella heidelberg (strain SL476).